We begin with the raw amino-acid sequence, 259 residues long: 3-oxo-5-alpha-steroid 4-dehydrogenase 1 (259 aa).

5 helical membrane-spanning segments follow: residues 10-30 (LCLL…SIVG), 86-106 (VLLA…PVLI), 111-131 (PTLL…GYVQ), 146-166 (VTHP…VINI), and 206-226 (WCGF…LFTL).

Belongs to the steroid 5-alpha reductase family. Liver and prostate (at a low level).

It is found in the microsome membrane. Its subcellular location is the endoplasmic reticulum membrane. The enzyme catalyses a 3-oxo-5alpha-steroid + NADP(+) = a 3-oxo-Delta(4)-steroid + NADPH + H(+). The catalysed reaction is 5alpha-pregnane-3,20-dione + NADP(+) = progesterone + NADPH + H(+). It carries out the reaction 17beta-hydroxy-5alpha-androstan-3-one + NADP(+) = testosterone + NADPH + H(+). It catalyses the reaction androst-4-ene-3,17-dione + NADPH + H(+) = 5alpha-androstan-3,17-dione + NADP(+). In terms of biological role, converts testosterone into 5-alpha-dihydrotestosterone and progesterone or corticosterone into their corresponding 5-alpha-3-oxosteroids. It plays a central role in sexual differentiation and androgen physiology. This is 3-oxo-5-alpha-steroid 4-dehydrogenase 1 from Rattus norvegicus (Rat).